Consider the following 320-residue polypeptide: Probable serine proteinase inhibitor 1 (320 aa).

Belongs to the serpin family. Poxviruses subfamily.

This chain is Probable serine proteinase inhibitor 1 (SPI-1), found in Swinepox virus (strain Kasza) (SWPV).